A 574-amino-acid polypeptide reads, in one-letter code: Sulfate adenylyltransferase (574 aa).

Residues 1–170 (MANPPHGGVL…VEAIDRLEHY (170 aa)) form an N-terminal region. The tract at residues 171–395 (DYVGLRYTPA…LRESHPPRNQ (225 aa)) is catalytic. Glutamine 198 contributes to the sulfate binding site. Residues 198–201 (QTRN) and 292–295 (GRDH) contribute to the ATP site. Catalysis depends on residues threonine 199, arginine 200, and asparagine 201. Arginine 200 contributes to the sulfate binding site. Alanine 296 contacts sulfate. Residue methionine 334 coordinates ATP. Residues 396-574 (QGFTVFLTGY…LESQGLLTQL (179 aa)) are allosteric regulation domain; adenylyl-sulfate kinase-like. 3'-phosphoadenylyl sulfate contacts are provided by residues 435 to 438 (ETVR), arginine 452, 478 to 479 (IA), and arginine 516.

This sequence in the N-terminal section; belongs to the sulfate adenylyltransferase family. In the C-terminal section; belongs to the APS kinase family. In terms of assembly, homohexamer. Dimer of trimers.

Its subcellular location is the cytoplasm. The catalysed reaction is sulfate + ATP + H(+) = adenosine 5'-phosphosulfate + diphosphate. It functions in the pathway sulfur metabolism; hydrogen sulfide biosynthesis; sulfite from sulfate: step 1/3. With respect to regulation, allosterically inhibited by 3'-phosphoadenosine 5'-phosphosulfate (PAPS). Catalyzes the first intracellular reaction of sulfate assimilation, forming adenosine-5'-phosphosulfate (APS) from inorganic sulfate and ATP. Plays an important role in sulfate activation as a component of the biosynthesis pathway of sulfur-containing amino acids. The polypeptide is Sulfate adenylyltransferase (Phaeosphaeria nodorum (strain SN15 / ATCC MYA-4574 / FGSC 10173) (Glume blotch fungus)).